The primary structure comprises 121 residues: Large ribosomal subunit protein uL14 (121 aa).

It belongs to the universal ribosomal protein uL14 family. In terms of assembly, part of the 50S ribosomal subunit. Forms a cluster with proteins L3 and L19. In the 70S ribosome, L14 and L19 interact and together make contacts with the 16S rRNA in bridges B5 and B8.

Binds to 23S rRNA. Forms part of two intersubunit bridges in the 70S ribosome. The polypeptide is Large ribosomal subunit protein uL14 (Prochlorococcus marinus (strain MIT 9301)).